A 202-amino-acid chain; its full sequence is Matrix protein (202 aa).

Positions 35 to 38 match the PPXY motif motif; it reads PPES. Residues 115-151 form an essential for glycoprotein binding region; the sequence is KIRRTLVFQWAESRGPLDGEELEYSQEITWDDDSEFI.

The protein belongs to the lyssavirus matrix protein family. As to quaternary structure, homomultimer. Interacts with nucleoprotein and with the cytoplasmic domain of glycoprotein.

It localises to the virion membrane. It is found in the host endomembrane system. In terms of biological role, plays a major role in assembly and budding of virion. Completely covers the ribonucleoprotein coil and keep it in condensed bullet-shaped form. Inhibits viral transcription and stimulates replication. Plays a major role in early induction of TRAIL-mediated apoptosis in infected neurons. This Myotis mystacinus (Whiskered bat) protein is Matrix protein (M).